The primary structure comprises 271 residues: Pyrroline-5-carboxylate reductase (271 aa).

The protein belongs to the pyrroline-5-carboxylate reductase family.

Its subcellular location is the cytoplasm. The catalysed reaction is L-proline + NADP(+) = (S)-1-pyrroline-5-carboxylate + NADPH + 2 H(+). It carries out the reaction L-proline + NAD(+) = (S)-1-pyrroline-5-carboxylate + NADH + 2 H(+). It participates in amino-acid biosynthesis; L-proline biosynthesis; L-proline from L-glutamate 5-semialdehyde: step 1/1. Functionally, catalyzes the reduction of 1-pyrroline-5-carboxylate (PCA) to L-proline. This Staphylococcus aureus (strain COL) protein is Pyrroline-5-carboxylate reductase.